The sequence spans 357 residues: Homoserine kinase (357 aa).

A Glycyl lysine isopeptide (Lys-Gly) (interchain with G-Cter in ubiquitin) cross-link involves residue lysine 133.

It belongs to the GHMP kinase family. Homoserine kinase subfamily. As to quaternary structure, homodimer.

The enzyme catalyses L-homoserine + ATP = O-phospho-L-homoserine + ADP + H(+). Its pathway is amino-acid biosynthesis; L-threonine biosynthesis; L-threonine from L-aspartate: step 4/5. In terms of biological role, commits homoserine to the threonine biosynthesis pathway by catalyzing its O-phosphorylation. This is Homoserine kinase (THR1) from Saccharomyces cerevisiae (strain ATCC 204508 / S288c) (Baker's yeast).